The primary structure comprises 473 residues: ATP synthase subunit beta (473 aa).

ATP is bound at residue 158-165 (GGAGVGKT).

This sequence belongs to the ATPase alpha/beta chains family. As to quaternary structure, F-type ATPases have 2 components, CF(1) - the catalytic core - and CF(0) - the membrane proton channel. CF(1) has five subunits: alpha(3), beta(3), gamma(1), delta(1), epsilon(1). CF(0) has three main subunits: a(1), b(2) and c(9-12). The alpha and beta chains form an alternating ring which encloses part of the gamma chain. CF(1) is attached to CF(0) by a central stalk formed by the gamma and epsilon chains, while a peripheral stalk is formed by the delta and b chains.

The protein localises to the cell membrane. It catalyses the reaction ATP + H2O + 4 H(+)(in) = ADP + phosphate + 5 H(+)(out). Functionally, produces ATP from ADP in the presence of a proton gradient across the membrane. The catalytic sites are hosted primarily by the beta subunits. The chain is ATP synthase subunit beta from Anoxybacillus flavithermus (strain DSM 21510 / WK1).